Reading from the N-terminus, the 439-residue chain is Adenylosuccinate synthetase (439 aa).

GTP contacts are provided by residues 14–20 and 42–44; these read GDEGKGK and GHT. Asp15 functions as the Proton acceptor in the catalytic mechanism. Mg(2+) contacts are provided by Asp15 and Gly42. IMP is bound by residues 15 to 18, 40 to 43, Thr130, Arg144, Gln225, Thr240, and Arg304; these read DEGK and NAGH. Catalysis depends on His43, which acts as the Proton donor. Residue 300–306 coordinates substrate; that stretch reads TTTGRRR. GTP-binding positions include Arg306, 332–334, and 414–416; these read KLD and SLG.

It belongs to the adenylosuccinate synthetase family. Homodimer. It depends on Mg(2+) as a cofactor.

It localises to the cytoplasm. The enzyme catalyses IMP + L-aspartate + GTP = N(6)-(1,2-dicarboxyethyl)-AMP + GDP + phosphate + 2 H(+). Its pathway is purine metabolism; AMP biosynthesis via de novo pathway; AMP from IMP: step 1/2. Plays an important role in the de novo pathway of purine nucleotide biosynthesis. Catalyzes the first committed step in the biosynthesis of AMP from IMP. The protein is Adenylosuccinate synthetase of Synechococcus sp. (strain CC9902).